An 86-amino-acid polypeptide reads, in one-letter code: Omega-theraphotoxin-Hhn1b (86 aa).

The signal sequence occupies residues 1 to 21 (MKSIVFVALFGLALLAVVCSA). Positions 22–50 (SEDAHKELLKEVVRAMVVDKTDAVQAEER) are excised as a propeptide. 3 disulfide bridges follow: Cys-52–Cys-66, Cys-59–Cys-71, and Cys-65–Cys-78.

Belongs to the neurotoxin 10 (Hwtx-1) family. 17 (Hntx-9) subfamily. As to expression, expressed by the venom gland.

Its subcellular location is the secreted. Its function is as follows. Ion channel inhibitor. This is Omega-theraphotoxin-Hhn1b from Cyriopagopus hainanus (Chinese bird spider).